The primary structure comprises 351 residues: Translation initiation factor eIF2B subunit beta (351 aa).

This sequence belongs to the eIF-2B alpha/beta/delta subunits family. As to quaternary structure, component of the translation initiation factor 2B (eIF2B) complex which is a heterodecamer of two sets of five different subunits: alpha, beta, gamma, delta and epsilon. Subunits alpha, beta and delta comprise a regulatory subcomplex and subunits epsilon and gamma comprise a catalytic subcomplex. Within the complex, the hexameric regulatory complex resides at the center, with the two heterodimeric catalytic subcomplexes bound on opposite sides.

It localises to the cytoplasm. The protein localises to the cytosol. Its activity is regulated as follows. Activated by the chemical integrated stress response (ISR) inhibitor ISRIB which stimulates guanine nucleotide exchange factor activity for both phosphorylated and unphosphorylated eIF2. Functionally, acts as a component of the translation initiation factor 2B (eIF2B) complex, which catalyzes the exchange of GDP for GTP on eukaryotic initiation factor 2 (eIF2) gamma subunit. Its guanine nucleotide exchange factor activity is repressed when bound to eIF2 complex phosphorylated on the alpha subunit, thereby limiting the amount of methionyl-initiator methionine tRNA available to the ribosome and consequently global translation is repressed. This is Translation initiation factor eIF2B subunit beta (EIF2B2) from Bos taurus (Bovine).